The primary structure comprises 648 residues: Acyl-CoA-binding domain-containing protein 5 (648 aa).

Residues 13–107 form the ACB domain; that stretch reads YPERFYAAAS…LEEADPGWYP (95 aa). An acyl-CoA is bound by residues Lys34, 49 to 53, and Lys75; that span reads YTLHQ. Kelch repeat units lie at residues 196–244, 256–306, 307–357, 359–408, 409–457, and 464–509; these read KMYM…KLTH, QLLS…LVGK, SLVI…VHAE, YLLI…TIGE, NWYI…LVVS, and IVVA…AVNN. Ser517 carries the phosphoserine modification. Residues 520-632 are a coiled coil; sequence KVEGKADRII…AATMNAKRQS (113 aa). Polar residues predominate over residues 625-634; that stretch reads TMNAKRQSSG. The tract at residues 625–648 is disordered; that stretch reads TMNAKRQSSGGVWGWLAGTPPPKT.

Belongs to the ACBP family. In terms of tissue distribution, expressed in roots, stems, leaves, flowers and siliques.

The protein resides in the cytoplasm. Binds medium- and long-chain acyl-CoA esters with very high affinity. Can interact in vitro with oleoyl-CoA, barely with palmitoyl-CoA, but not with arachidonyl-CoA. May function as an intracellular carrier of acyl-CoA esters. The chain is Acyl-CoA-binding domain-containing protein 5 (ACBP5) from Arabidopsis thaliana (Mouse-ear cress).